The primary structure comprises 504 residues: Lysine--tRNA ligase (504 aa).

Glu404 and Glu411 together coordinate Mg(2+).

It belongs to the class-II aminoacyl-tRNA synthetase family. In terms of assembly, homodimer. Requires Mg(2+) as cofactor.

It localises to the cytoplasm. The enzyme catalyses tRNA(Lys) + L-lysine + ATP = L-lysyl-tRNA(Lys) + AMP + diphosphate. The chain is Lysine--tRNA ligase from Aliarcobacter butzleri (strain RM4018) (Arcobacter butzleri).